The primary structure comprises 46 residues: Protein PsbN (46 aa).

The helical transmembrane segment at 10 to 30 (VSIAVLTALLGLTGFGIYTAF) threads the bilayer.

Belongs to the PsbN family.

The protein localises to the cellular thylakoid membrane. Its function is as follows. May play a role in photosystem I and II biogenesis. In Synechococcus sp. (strain RCC307), this protein is Protein PsbN.